The primary structure comprises 382 residues: Lipid-A-disaccharide synthase (382 aa).

Belongs to the LpxB family.

The catalysed reaction is 2-N,3-O-bis[(3R)-3-hydroxytetradecanoyl]-alpha-D-glucosaminyl 1-phosphate + UDP-2-N,3-O-bis[(3R)-3-hydroxytetradecanoyl]-alpha-D-glucosamine = lipid A disaccharide (E. coli) + UDP + H(+). It carries out the reaction a lipid X + a UDP-2-N,3-O-bis[(3R)-3-hydroxyacyl]-alpha-D-glucosamine = a lipid A disaccharide + UDP + H(+). It participates in glycolipid biosynthesis; lipid IV(A) biosynthesis; lipid IV(A) from (3R)-3-hydroxytetradecanoyl-[acyl-carrier-protein] and UDP-N-acetyl-alpha-D-glucosamine: step 5/6. Functionally, condensation of UDP-2,3-diacylglucosamine and 2,3-diacylglucosamine-1-phosphate to form lipid A disaccharide, a precursor of lipid A, a phosphorylated glycolipid that anchors the lipopolysaccharide to the outer membrane of the cell. The chain is Lipid-A-disaccharide synthase from Salmonella paratyphi B (strain ATCC BAA-1250 / SPB7).